We begin with the raw amino-acid sequence, 247 residues long: UDP-N-acetyl-D-mannosaminuronic acid transferase (247 aa).

It belongs to the glycosyltransferase 26 family.

It catalyses the reaction UDP-N-acetyl-alpha-D-mannosaminouronate + N-acetyl-alpha-D-glucosaminyl-di-trans,octa-cis-undecaprenyl diphosphate = beta-D-ManNAcA-(1-&gt;4)-alpha-D-GlcNAc-di-trans,octa-cis-undecaprenyl diphosphate + UDP + H(+). Its pathway is bacterial outer membrane biogenesis; enterobacterial common antigen biosynthesis. Functionally, catalyzes the synthesis of Und-PP-GlcNAc-ManNAcA (Lipid II), the second lipid-linked intermediate involved in enterobacterial common antigen (ECA) synthesis. The polypeptide is UDP-N-acetyl-D-mannosaminuronic acid transferase (Enterobacter sp. (strain 638)).